We begin with the raw amino-acid sequence, 331 residues long: Bifunctional nuclease 1 (331 aa).

The 136-residue stretch at 126–261 folds into the BFN domain; sequence CVQNNPRVLR…RIAYNNGLKV (136 aa). One can recognise a UVR domain in the interval 291-326; the sequence is EAQEFDLVRNMLVAAVEERYKDAAQYRDQLFMFRAK.

It belongs to the bifunctional nuclease family.

Its subcellular location is the nucleus. Bifunctional nuclease with both RNase and DNase activities. Involved in basal defense response. Participates in abscisic acid-derived callose deposition following infection by a necrotrophic pathogen. The sequence is that of Bifunctional nuclease 1 (BBD1) from Oryza sativa subsp. indica (Rice).